The following is a 258-amino-acid chain: Imidazole glycerol phosphate synthase subunit HisF (258 aa).

Active-site residues include D11 and D130.

Belongs to the HisA/HisF family. Heterodimer of HisH and HisF.

The protein resides in the cytoplasm. It carries out the reaction 5-[(5-phospho-1-deoxy-D-ribulos-1-ylimino)methylamino]-1-(5-phospho-beta-D-ribosyl)imidazole-4-carboxamide + L-glutamine = D-erythro-1-(imidazol-4-yl)glycerol 3-phosphate + 5-amino-1-(5-phospho-beta-D-ribosyl)imidazole-4-carboxamide + L-glutamate + H(+). It participates in amino-acid biosynthesis; L-histidine biosynthesis; L-histidine from 5-phospho-alpha-D-ribose 1-diphosphate: step 5/9. Functionally, IGPS catalyzes the conversion of PRFAR and glutamine to IGP, AICAR and glutamate. The HisF subunit catalyzes the cyclization activity that produces IGP and AICAR from PRFAR using the ammonia provided by the HisH subunit. The chain is Imidazole glycerol phosphate synthase subunit HisF from Klebsiella pneumoniae (strain 342).